The primary structure comprises 86 residues: Muscarinic toxin-like protein (86 aa).

The signal sequence occupies residues 1-21 (MKTLLLTLAVVTMVCMDLGYT). 4 disulfides stabilise this stretch: cysteine 24–cysteine 45, cysteine 38–cysteine 62, cysteine 66–cysteine 78, and cysteine 79–cysteine 84.

Belongs to the three-finger toxin family. Short-chain subfamily. Orphan group VIII (haditoxin) sub-subfamily. In terms of assembly, homodimer; non-covalently linked. In terms of tissue distribution, expressed by the venom gland.

Its subcellular location is the secreted. Its function is as follows. Antagonist of muscle and neuronal nicotinic acetylcholine receptors (nAChR) with highest affinity for neuronal alpha-7/CHRNA7 nAChRs. In Bungarus multicinctus (Many-banded krait), this protein is Muscarinic toxin-like protein.